The chain runs to 624 residues: Probable potassium transport system protein Kup 1 (624 aa).

12 helical membrane-spanning segments follow: residues Leu-10–Leu-30, Leu-48–Phe-68, Pro-94–Thr-114, Leu-133–Ala-153, Ile-159–Ile-179, Phe-210–Gly-230, Phe-242–Val-262, Pro-270–Ala-290, Ile-331–Phe-351, Ile-363–Ile-383, Thr-388–Ala-408, and Phe-413–Ser-433.

It belongs to the HAK/KUP transporter (TC 2.A.72) family.

Its subcellular location is the cell inner membrane. It catalyses the reaction K(+)(in) + H(+)(in) = K(+)(out) + H(+)(out). Transport of potassium into the cell. Likely operates as a K(+):H(+) symporter. The protein is Probable potassium transport system protein Kup 1 of Legionella pneumophila (strain Paris).